A 601-amino-acid polypeptide reads, in one-letter code: Elongation factor 4 (601 aa).

The tr-type G domain maps to Arg-7–Lys-189. GTP contacts are provided by residues Asp-19–Thr-24 and Asn-136–Asp-139.

The protein belongs to the TRAFAC class translation factor GTPase superfamily. Classic translation factor GTPase family. LepA subfamily.

It localises to the cell inner membrane. The catalysed reaction is GTP + H2O = GDP + phosphate + H(+). In terms of biological role, required for accurate and efficient protein synthesis under certain stress conditions. May act as a fidelity factor of the translation reaction, by catalyzing a one-codon backward translocation of tRNAs on improperly translocated ribosomes. Back-translocation proceeds from a post-translocation (POST) complex to a pre-translocation (PRE) complex, thus giving elongation factor G a second chance to translocate the tRNAs correctly. Binds to ribosomes in a GTP-dependent manner. The chain is Elongation factor 4 from Xanthomonas campestris pv. campestris (strain ATCC 33913 / DSM 3586 / NCPPB 528 / LMG 568 / P 25).